The sequence spans 231 residues: High-affinity zinc uptake system ATP-binding protein ZnuC (231 aa).

In terms of domain architecture, ABC transporter spans 4-230 (VSLKDIVFGY…CLTWNSCDEL (227 aa)).

It belongs to the ABC transporter superfamily. As to quaternary structure, the complex is composed of two ATP-binding proteins (ZnuC), two transmembrane proteins (ZnuB) and a solute-binding protein (ZnuA).

The protein localises to the cell membrane. It carries out the reaction Zn(2+)(out) + ATP(in) + H2O(in) = Zn(2+)(in) + ADP(in) + phosphate(in) + H(+)(in). Functionally, part of the high-affinity ABC transporter complex ZnuABC involved in zinc import. Responsible for energy coupling to the transport system. ZnuABC-mediated zinc transport is required for comF expression and competence development. The sequence is that of High-affinity zinc uptake system ATP-binding protein ZnuC (znuC) from Bacillus subtilis (strain 168).